The primary structure comprises 388 residues: NADH-quinone oxidoreductase subunit D 2 (388 aa).

This sequence belongs to the complex I 49 kDa subunit family. As to quaternary structure, NDH-1 is composed of 14 different subunits. Subunits NuoB, C, D, E, F, and G constitute the peripheral sector of the complex.

The protein localises to the cell membrane. The catalysed reaction is a quinone + NADH + 5 H(+)(in) = a quinol + NAD(+) + 4 H(+)(out). In terms of biological role, NDH-1 shuttles electrons from NADH, via FMN and iron-sulfur (Fe-S) centers, to quinones in the respiratory chain. The immediate electron acceptor for the enzyme in this species is believed to be a menaquinone. Couples the redox reaction to proton translocation (for every two electrons transferred, four hydrogen ions are translocated across the cytoplasmic membrane), and thus conserves the redox energy in a proton gradient. This is NADH-quinone oxidoreductase subunit D 2 from Salinispora tropica (strain ATCC BAA-916 / DSM 44818 / JCM 13857 / NBRC 105044 / CNB-440).